Consider the following 147-residue polypeptide: Protein-export protein SecB (147 aa).

It belongs to the SecB family. As to quaternary structure, homotetramer, a dimer of dimers. One homotetramer interacts with 1 SecA dimer.

Its subcellular location is the cytoplasm. In terms of biological role, one of the proteins required for the normal export of preproteins out of the cell cytoplasm. It is a molecular chaperone that binds to a subset of precursor proteins, maintaining them in a translocation-competent state. It also specifically binds to its receptor SecA. This Neisseria meningitidis serogroup C (strain 053442) protein is Protein-export protein SecB.